Reading from the N-terminus, the 392-residue chain is GTPase Obg (392 aa).

An Obg domain is found at 1–159 (MKFIDEALIR…RDLQLELMLL (159 aa)). The OBG-type G domain occupies 160-333 (ADVGMLGLPN…LCRDIMDFIE (174 aa)). GTP is bound by residues 166-173 (GLPNAGKS), 191-195 (FTTLV), 213-216 (DIPG), 283-286 (NKID), and 314-316 (SAA). 2 residues coordinate Mg(2+): Ser-173 and Thr-193. Residues 362–392 (EQVFTEDDQEGDDWDDWSEDDEEGVEIIYKP) form a disordered region. Acidic residues predominate over residues 365-386 (FTEDDQEGDDWDDWSEDDEEGV).

The protein belongs to the TRAFAC class OBG-HflX-like GTPase superfamily. OBG GTPase family. Monomer. It depends on Mg(2+) as a cofactor.

It is found in the cytoplasm. An essential GTPase which binds GTP, GDP and possibly (p)ppGpp with moderate affinity, with high nucleotide exchange rates and a fairly low GTP hydrolysis rate. Plays a role in control of the cell cycle, stress response, ribosome biogenesis and in those bacteria that undergo differentiation, in morphogenesis control. This chain is GTPase Obg, found in Histophilus somni (strain 129Pt) (Haemophilus somnus).